The sequence spans 848 residues: Adenylate cyclase (848 aa).

Residues 1 to 535 (MYLYIETLKQ…DVSHHFPLRL (535 aa)) form a catalytic region. Positions 541–848 (KALYSPCEIR…DTPLLQQYFS (308 aa)) are regulatory. The residue at position 609 (histidine 609) is a Phosphohistidine; by CRR.

The protein belongs to the adenylyl cyclase class-1 family.

It localises to the cytoplasm. The enzyme catalyses ATP = 3',5'-cyclic AMP + diphosphate. The protein is Adenylate cyclase (cyaA) of Shigella flexneri.